The sequence spans 1070 residues: DNA-directed RNA polymerase subunit beta (1070 aa).

It belongs to the RNA polymerase beta chain family. As to quaternary structure, in plastids the minimal PEP RNA polymerase catalytic core is composed of four subunits: alpha, beta, beta', and beta''. When a (nuclear-encoded) sigma factor is associated with the core the holoenzyme is formed, which can initiate transcription.

The protein resides in the plastid. The protein localises to the chloroplast. The catalysed reaction is RNA(n) + a ribonucleoside 5'-triphosphate = RNA(n+1) + diphosphate. Its function is as follows. DNA-dependent RNA polymerase catalyzes the transcription of DNA into RNA using the four ribonucleoside triphosphates as substrates. This is DNA-directed RNA polymerase subunit beta from Chloranthus spicatus (Chulantree).